We begin with the raw amino-acid sequence, 192 residues long: Superoxide dismutase [Fe] (192 aa).

Fe cation-binding residues include histidine 27, histidine 74, aspartate 157, and histidine 161.

Belongs to the iron/manganese superoxide dismutase family. As to quaternary structure, homodimer. Fe cation is required as a cofactor.

The enzyme catalyses 2 superoxide + 2 H(+) = H2O2 + O2. Destroys superoxide anion radicals which are normally produced within the cells and which are toxic to biological systems. This Bordetella pertussis (strain Tohama I / ATCC BAA-589 / NCTC 13251) protein is Superoxide dismutase [Fe] (sodB).